A 671-amino-acid polypeptide reads, in one-letter code: Gametogenetin-binding protein 2-like (671 aa).

Disordered regions lie at residues 372–489 (REQK…ARVQ) and 532–562 (VRDSGYGSDPPSHAGSRTSSAISSPEGSEVS). Over residues 373–384 (EQKKLKKKKKKD) the composition is skewed to basic residues. Residues 385 to 395 (EKKNLLHRQCD) are compositionally biased toward basic and acidic residues. Over residues 396-420 (DTEANESDEEEEELRNEELDLEEES) the composition is skewed to acidic residues. A compositionally biased stretch (basic residues) spans 455–472 (TKSKPKKQSKKKKQKKAA). 2 stretches are compositionally biased toward polar residues: residues 476–486 (MGNQKQMQATA) and 546–557 (GSRTSSAISSPE).

This Drosophila melanogaster (Fruit fly) protein is Gametogenetin-binding protein 2-like.